We begin with the raw amino-acid sequence, 229 residues long: ATP synthase subunit a 1 (229 aa).

The next 6 helical transmembrane spans lie at 25 to 45 (ADAV…SFLA), 86 to 106 (VATV…PGFF), 111 to 131 (NINT…VVGI), 142 to 162 (FCGP…IGHL), 181 to 201 (LVLI…MMLM), and 202 to 222 (GVLV…IYIQ).

This sequence belongs to the ATPase A chain family. F-type ATPases have 2 components, CF(1) - the catalytic core - and CF(0) - the membrane proton channel. CF(1) has five subunits: alpha(3), beta(3), gamma(1), delta(1), epsilon(1). CF(0) has three main subunits: a(1), b(2) and c(9-12). The alpha and beta chains form an alternating ring which encloses part of the gamma chain. CF(1) is attached to CF(0) by a central stalk formed by the gamma and epsilon chains, while a peripheral stalk is formed by the delta and b chains.

The protein localises to the cell inner membrane. Functionally, key component of the proton channel; it plays a direct role in the translocation of protons across the membrane. This chain is ATP synthase subunit a 1, found in Pelobacter propionicus (strain DSM 2379 / NBRC 103807 / OttBd1).